The chain runs to 308 residues: uncharacterized protein (308 aa).

Polar residues-rich tracts occupy residues 138–148 and 205–229; these read WSFTKHGSNTP and STSH…QPPS. Disordered regions lie at residues 138 to 157 and 205 to 235; these read WSFT…PLCN and STSH…TDAS.

The protein localises to the cytoplasm. This is an uncharacterized protein from Schizosaccharomyces pombe (strain 972 / ATCC 24843) (Fission yeast).